Reading from the N-terminus, the 410-residue chain is Mating-type locus allele B3 protein (410 aa).

The segment at 1-110 (MSRDPKLSLS…ANVVSPGEGC (110 aa)) is variable domain between B alleles. Residues 107–184 (GEGCRNLSED…NARRRSGWSH (78 aa)) constitute a DNA-binding region (homeobox; TALE-type). A highly conserved between B alleles region spans residues 111–410 (RNLSEDLPAY…PFLCLSVAFV (300 aa)). 2 disordered regions span residues 203–224 (AKLS…PSDD) and 278–335 (TPKP…TPEL). A compositionally biased stretch (polar residues) spans 205–219 (LSSSNQSTPPSLTSE). The Nuclear localization signal signature appears at 276 to 308 (KKTPKPGMPRPVTTVAKRHPARKTKPAAKPKSR). The span at 291–307 (AKRHPARKTKPAAKPKS) shows a compositional bias: basic residues. A compositionally biased stretch (polar residues) spans 312–335 (PRASTTPSIDSTLDSSKLESTPEL). Positions 333–410 (PELSMCSTAD…PFLCLSVAFV (78 aa)) are not essential for B3 function.

It belongs to the TALE/M-ATYP homeobox family.

The protein localises to the nucleus. Its function is as follows. The B locus has at least 25 alleles, and any combination of two different B alleles yields a multimeric regulatory protein, that activates genes responsible for the pathogenicity and for the sexual development of the fungus within the corn plant. The protein is Mating-type locus allele B3 protein of Mycosarcoma maydis (Corn smut fungus).